A 1199-amino-acid polypeptide reads, in one-letter code: Chromatin structure-remodeling complex subunit snf21 (1199 aa).

In terms of domain architecture, HSA spans 256-328 (QRSDRERRLK…AKQRLQALKE (73 aa)). Residues 429–594 (ISLYNNHLNG…WALLNFVLPR (166 aa)) form the Helicase ATP-binding domain. ATP is bound at residue 442-449 (DEMGLGKT). The short motif at 544-547 (DEGH) is the DEGH box element. Residues 740–903 (LLDRILPKLF…STPEEREAFL (164 aa)) enclose the Helicase C-terminal domain. The disordered stretch occupies residues 1017 to 1059 (MESEARPTRGRPKRNIASVDETPALTLNGKPKKKRGPAPDTLT). The region spanning 1061–1171 (EHRSLLRRVC…TAMETKIEEL (111 aa)) is the Bromo domain.

This sequence belongs to the SNF2/RAD54 helicase family. As to quaternary structure, component of the RSC complex composed of at least arp9, arp42, rsc1, rsc4, rsc7, rsc9, rsc58, sfh1, snf21, ssr1, ssr2, ssr3 and ssr4. The complex interacts with histone and histone variant components of centromeric chromatin.

The protein localises to the nucleus. Helicase. Component of the chromatin structure remodeling complex (RSC), which is involved in transcription regulation and nucleosome positioning. Controls particularly membrane and organelle development genes. This chain is Chromatin structure-remodeling complex subunit snf21 (snf21), found in Schizosaccharomyces pombe (strain 972 / ATCC 24843) (Fission yeast).